A 455-amino-acid chain; its full sequence is Na(+)/H(+) antiporter NhaA (455 aa).

11 helical membrane-spanning segments follow: residues 31 to 51 (ASGI…NSPW), 83 to 103 (GLMS…VLIG), 113 to 133 (FPLI…LLCV), 141 to 161 (GWGI…ILLG), 170 to 190 (VFVT…IALF), 198 to 218 (VSLL…LLGI), 231 to 251 (IWAA…LLAF), 309 to 329 (GLQP…NAGV), 345 to 365 (IGVA…FAWL), 383 to 403 (IFGA…IASL), and 414 to 434 (SKIG…VVLW).

This sequence belongs to the NhaA Na(+)/H(+) (TC 2.A.33) antiporter family.

The protein localises to the cell inner membrane. The catalysed reaction is Na(+)(in) + 2 H(+)(out) = Na(+)(out) + 2 H(+)(in). Its function is as follows. Na(+)/H(+) antiporter that extrudes sodium in exchange for external protons. The polypeptide is Na(+)/H(+) antiporter NhaA (Koribacter versatilis (strain Ellin345)).